The primary structure comprises 228 residues: Ribosomal RNA small subunit methyltransferase G (228 aa).

S-adenosyl-L-methionine-binding positions include Gly-92, Phe-97, 115-117 (EAT), 143-144 (AE), and Arg-156.

Belongs to the methyltransferase superfamily. RNA methyltransferase RsmG family.

It localises to the cytoplasm. Specifically methylates the N7 position of a guanine in 16S rRNA. This Thermosynechococcus vestitus (strain NIES-2133 / IAM M-273 / BP-1) protein is Ribosomal RNA small subunit methyltransferase G.